The following is a 235-amino-acid chain: Thiamine import ATP-binding protein ThiQ (235 aa).

Residues 2–230 (LKLENLTYRY…TVPEAAILGM (229 aa)) enclose the ABC transporter domain. Residue 32 to 39 (GPSGAGKS) participates in ATP binding.

Belongs to the ABC transporter superfamily. Thiamine importer (TC 3.A.1.19.1) family. The complex is composed of two ATP-binding proteins (ThiQ), two transmembrane proteins (ThiP) and a solute-binding protein (ThiB).

The protein resides in the cell inner membrane. It catalyses the reaction thiamine(out) + ATP + H2O = thiamine(in) + ADP + phosphate + H(+). Its function is as follows. Part of the ABC transporter complex ThiBPQ involved in thiamine import. Responsible for energy coupling to the transport system. The sequence is that of Thiamine import ATP-binding protein ThiQ from Photorhabdus laumondii subsp. laumondii (strain DSM 15139 / CIP 105565 / TT01) (Photorhabdus luminescens subsp. laumondii).